The following is a 121-amino-acid chain: Peptidyl-tRNA hydrolase (121 aa).

The protein belongs to the PTH2 family.

The protein resides in the cytoplasm. It carries out the reaction an N-acyl-L-alpha-aminoacyl-tRNA + H2O = an N-acyl-L-amino acid + a tRNA + H(+). The natural substrate for this enzyme may be peptidyl-tRNAs which drop off the ribosome during protein synthesis. This Staphylothermus marinus (strain ATCC 43588 / DSM 3639 / JCM 9404 / F1) protein is Peptidyl-tRNA hydrolase.